Here is a 30-residue protein sequence, read N- to C-terminus: 136 kDa hydroxyproline-rich cell wall glycoprotein, major component (30 aa).

13 positions are modified to 4-hydroxyproline: Pro-8, Pro-9, Pro-10, Pro-11, Pro-12, Pro-17, Pro-18, Pro-19, Pro-20, Pro-26, Pro-27, Pro-28, and Pro-29.

Post-translationally, O-glycosylated.

The protein resides in the secreted. It is found in the cell wall. The polypeptide is 136 kDa hydroxyproline-rich cell wall glycoprotein, major component (Phaseolus vulgaris (Kidney bean)).